Here is a 137-residue protein sequence, read N- to C-terminus: Holo-[acyl-carrier-protein] synthase (137 aa).

The Mg(2+) site is built by D7 and E58.

It belongs to the P-Pant transferase superfamily. AcpS family. It depends on Mg(2+) as a cofactor.

The protein resides in the cytoplasm. The catalysed reaction is apo-[ACP] + CoA = holo-[ACP] + adenosine 3',5'-bisphosphate + H(+). Its function is as follows. Transfers the 4'-phosphopantetheine moiety from coenzyme A to a Ser of acyl-carrier-protein. This chain is Holo-[acyl-carrier-protein] synthase, found in Chloroflexus aurantiacus (strain ATCC 29366 / DSM 635 / J-10-fl).